Reading from the N-terminus, the 269-residue chain is Sulfur carrier protein FdhD (269 aa).

Cysteine 111 serves as the catalytic Cysteine persulfide intermediate.

It belongs to the FdhD family.

The protein resides in the cytoplasm. Its function is as follows. Required for formate dehydrogenase (FDH) activity. Acts as a sulfur carrier protein that transfers sulfur from IscS to the molybdenum cofactor prior to its insertion into FDH. This chain is Sulfur carrier protein FdhD, found in Brucella abortus biovar 1 (strain 9-941).